The sequence spans 393 residues: Short-chain dehydrogenase/reductase family 42E member 1 (393 aa).

Tyr152 (proton acceptor) is an active-site residue. Lys156 serves as a coordination point for NAD(+). Helical transmembrane passes span 282–302 (LPLT…FILG) and 371–391 (GLLV…SVIL).

This sequence belongs to the 3-beta-HSD family.

Its subcellular location is the membrane. The polypeptide is Short-chain dehydrogenase/reductase family 42E member 1 (SDR42E1) (Homo sapiens (Human)).